A 135-amino-acid chain; its full sequence is UPF0355 protein SE_2351 (135 aa).

It belongs to the UPF0355 family.

In Staphylococcus epidermidis (strain ATCC 12228 / FDA PCI 1200), this protein is UPF0355 protein SE_2351.